Here is a 300-residue protein sequence, read N- to C-terminus: C-5 sterol desaturase (300 aa).

The next 4 helical transmembrane spans lie at 3–23 (DPVL…WTAA), 68–88 (SLAL…QLSA), 91–111 (WYTW…YHRI), and 147–167 (ILMW…FCSW). The region spanning 94 to 227 (WVIAIVGVDL…LIIWDRLFGS (134 aa)) is the Fatty acid hydroxylase domain.

The protein belongs to the sterol desaturase family.

The protein localises to the cell membrane. The sequence is that of C-5 sterol desaturase (erg3) from Mycobacterium bovis (strain ATCC BAA-935 / AF2122/97).